Consider the following 284-residue polypeptide: Tropomyosin (284 aa).

A coiled-coil region spans residues 1-284 (MEAIKNKMQA…DQTFAELTGY (284 aa)).

Belongs to the tropomyosin family. As to quaternary structure, homodimer.

In terms of biological role, tropomyosin, in association with the troponin complex, plays a central role in the calcium dependent regulation of muscle contraction. This is Tropomyosin from Dermatophagoides pteronyssinus (European house dust mite).